Consider the following 129-residue polypeptide: Small ribosomal subunit protein uS11 (129 aa).

The protein belongs to the universal ribosomal protein uS11 family. In terms of assembly, part of the 30S ribosomal subunit. Interacts with proteins S7 and S18. Binds to IF-3.

Functionally, located on the platform of the 30S subunit, it bridges several disparate RNA helices of the 16S rRNA. Forms part of the Shine-Dalgarno cleft in the 70S ribosome. This is Small ribosomal subunit protein uS11 from Cereibacter sphaeroides (strain ATCC 17029 / ATH 2.4.9) (Rhodobacter sphaeroides).